Consider the following 270-residue polypeptide: Interleukin-1 beta (270 aa).

Residues Met1–Asp118 constitute a propeptide that is removed on maturation.

The protein belongs to the IL-1 family. In terms of assembly, monomer. In its precursor form, weakly interacts with full-length MEFV; the mature cytokine does not interact at all. Interacts with integrins ITGAV:ITGBV and ITGA5:ITGB1; integrin-binding is required for IL1B signaling. Interacts with cargo receptor TMED10; the interaction is direct and is required for the secretion of IL1B mature form. Interacts with HSP90AB1; the interaction facilitates cargo translocation into the ERGIC. Interacts with HSP90B1; the interaction facilitates cargo translocation into the ERGIC.

It localises to the cytoplasm. The protein localises to the cytosol. It is found in the secreted. The protein resides in the lysosome. Its subcellular location is the extracellular exosome. Its function is as follows. Potent pro-inflammatory cytokine. Initially discovered as the major endogenous pyrogen, induces prostaglandin synthesis, neutrophil influx and activation, T-cell activation and cytokine production, B-cell activation and antibody production, and fibroblast proliferation and collagen production. Promotes Th17 differentiation of T-cells. Synergizes with IL12/interleukin-12 to induce IFNG synthesis from T-helper 1 (Th1) cells. Plays a role in angiogenesis by inducing VEGF production synergistically with TNF and IL6. Involved in transduction of inflammation downstream of pyroptosis: its mature form is specifically released in the extracellular milieu by passing through the gasdermin-D (GSDMD) pore. This is Interleukin-1 beta (IL1B) from Eumetopias jubatus (Steller sea lion).